The sequence spans 298 residues: 4-diphosphocytidyl-2-C-methyl-D-erythritol kinase (298 aa).

Residue lysine 19 is part of the active site. 106 to 116 contacts ATP; the sequence is PVASGIGGGSA. The active site involves aspartate 148.

Belongs to the GHMP kinase family. IspE subfamily.

The enzyme catalyses 4-CDP-2-C-methyl-D-erythritol + ATP = 4-CDP-2-C-methyl-D-erythritol 2-phosphate + ADP + H(+). Its pathway is isoprenoid biosynthesis; isopentenyl diphosphate biosynthesis via DXP pathway; isopentenyl diphosphate from 1-deoxy-D-xylulose 5-phosphate: step 3/6. In terms of biological role, catalyzes the phosphorylation of the position 2 hydroxy group of 4-diphosphocytidyl-2C-methyl-D-erythritol. The chain is 4-diphosphocytidyl-2-C-methyl-D-erythritol kinase from Rhizobium leguminosarum bv. trifolii (strain WSM2304).